Reading from the N-terminus, the 203-residue chain is Venom allergen 5 (203 aa).

4 disulfides stabilise this stretch: cysteine 4–cysteine 15, cysteine 7–cysteine 100, cysteine 25–cysteine 93, and cysteine 169–cysteine 186. The SCP domain maps to 45-188; sequence KRHNEFRQKV…WHTHYLVCNY (144 aa).

Belongs to the CRISP family. Venom allergen 5-like subfamily. As to expression, expressed by the venom gland.

Its subcellular location is the secreted. This Dolichovespula arenaria (Yellow hornet) protein is Venom allergen 5.